A 280-amino-acid chain; its full sequence is NAD(P)H-quinone oxidoreductase subunit K, chloroplastic (280 aa).

Residues cysteine 65, cysteine 66, cysteine 130, and cysteine 161 each coordinate [4Fe-4S] cluster. The segment at 257–280 is disordered; it reads LLKDWKQSNQKQEQNVKMMKEEEA.

The protein belongs to the complex I 20 kDa subunit family. NDH is composed of at least 16 different subunits, 5 of which are encoded in the nucleus. The cofactor is [4Fe-4S] cluster.

It is found in the plastid. The protein localises to the chloroplast thylakoid membrane. It catalyses the reaction a plastoquinone + NADH + (n+1) H(+)(in) = a plastoquinol + NAD(+) + n H(+)(out). The catalysed reaction is a plastoquinone + NADPH + (n+1) H(+)(in) = a plastoquinol + NADP(+) + n H(+)(out). In terms of biological role, NDH shuttles electrons from NAD(P)H:plastoquinone, via FMN and iron-sulfur (Fe-S) centers, to quinones in the photosynthetic chain and possibly in a chloroplast respiratory chain. The immediate electron acceptor for the enzyme in this species is believed to be plastoquinone. Couples the redox reaction to proton translocation, and thus conserves the redox energy in a proton gradient. The chain is NAD(P)H-quinone oxidoreductase subunit K, chloroplastic from Staurastrum punctulatum (Green alga).